A 206-amino-acid polypeptide reads, in one-letter code: Small ribosomal subunit protein uS4 (206 aa).

An S4 RNA-binding domain is found at 96–156 (TRLDNVVYRM…EKSRTQARIK (61 aa)).

It belongs to the universal ribosomal protein uS4 family. Part of the 30S ribosomal subunit. Contacts protein S5. The interaction surface between S4 and S5 is involved in control of translational fidelity.

In terms of biological role, one of the primary rRNA binding proteins, it binds directly to 16S rRNA where it nucleates assembly of the body of the 30S subunit. Functionally, with S5 and S12 plays an important role in translational accuracy. The protein is Small ribosomal subunit protein uS4 of Shewanella halifaxensis (strain HAW-EB4).